The chain runs to 196 residues: ATP-dependent Clp protease proteolytic subunit (196 aa).

The active-site Nucleophile is the serine 101. The active site involves histidine 126.

The protein belongs to the peptidase S14 family. As to quaternary structure, component of the chloroplastic Clp protease core complex.

The protein localises to the plastid. It is found in the chloroplast stroma. It carries out the reaction Hydrolysis of proteins to small peptides in the presence of ATP and magnesium. alpha-casein is the usual test substrate. In the absence of ATP, only oligopeptides shorter than five residues are hydrolyzed (such as succinyl-Leu-Tyr-|-NHMec, and Leu-Tyr-Leu-|-Tyr-Trp, in which cleavage of the -Tyr-|-Leu- and -Tyr-|-Trp bonds also occurs).. In terms of biological role, cleaves peptides in various proteins in a process that requires ATP hydrolysis. Has a chymotrypsin-like activity. Plays a major role in the degradation of misfolded proteins. The polypeptide is ATP-dependent Clp protease proteolytic subunit (Pleurastrum terricola (Filamentous green alga)).